A 156-amino-acid polypeptide reads, in one-letter code: 6,7-dimethyl-8-ribityllumazine synthase (156 aa).

Residues Phe28, 62-64 (ALE), and 86-88 (AVI) contribute to the 5-amino-6-(D-ribitylamino)uracil site. Residue 91 to 92 (ET) participates in (2S)-2-hydroxy-3-oxobutyl phosphate binding. Catalysis depends on His94, which acts as the Proton donor. 5-amino-6-(D-ribitylamino)uracil is bound at residue Asn119. Arg133 contributes to the (2S)-2-hydroxy-3-oxobutyl phosphate binding site.

It belongs to the DMRL synthase family.

It carries out the reaction (2S)-2-hydroxy-3-oxobutyl phosphate + 5-amino-6-(D-ribitylamino)uracil = 6,7-dimethyl-8-(1-D-ribityl)lumazine + phosphate + 2 H2O + H(+). The protein operates within cofactor biosynthesis; riboflavin biosynthesis; riboflavin from 2-hydroxy-3-oxobutyl phosphate and 5-amino-6-(D-ribitylamino)uracil: step 1/2. Functionally, catalyzes the formation of 6,7-dimethyl-8-ribityllumazine by condensation of 5-amino-6-(D-ribitylamino)uracil with 3,4-dihydroxy-2-butanone 4-phosphate. This is the penultimate step in the biosynthesis of riboflavin. The sequence is that of 6,7-dimethyl-8-ribityllumazine synthase from Azoarcus sp. (strain BH72).